The chain runs to 65 residues: Small ribosomal subunit protein bS21 (65 aa).

Positions 46–57 are enriched in basic residues; sequence RLKRSRSKRRAQ. Positions 46–65 are disordered; that stretch reads RLKRSRSKRRAQRANEERNS.

This sequence belongs to the bacterial ribosomal protein bS21 family.

In Chlorobaculum tepidum (strain ATCC 49652 / DSM 12025 / NBRC 103806 / TLS) (Chlorobium tepidum), this protein is Small ribosomal subunit protein bS21.